A 327-amino-acid polypeptide reads, in one-letter code: Phenylalanine--tRNA ligase alpha subunit (327 aa).

E252 serves as a coordination point for Mg(2+).

It belongs to the class-II aminoacyl-tRNA synthetase family. Phe-tRNA synthetase alpha subunit type 1 subfamily. As to quaternary structure, tetramer of two alpha and two beta subunits. Mg(2+) is required as a cofactor.

It localises to the cytoplasm. The enzyme catalyses tRNA(Phe) + L-phenylalanine + ATP = L-phenylalanyl-tRNA(Phe) + AMP + diphosphate + H(+). This Yersinia pestis bv. Antiqua (strain Antiqua) protein is Phenylalanine--tRNA ligase alpha subunit.